The following is a 158-amino-acid chain: 2-C-methyl-D-erythritol 2,4-cyclodiphosphate synthase (158 aa).

A divalent metal cation-binding residues include Asp8 and His10. 4-CDP-2-C-methyl-D-erythritol 2-phosphate-binding positions include 8–10 (DVH) and 34–35 (HS). His42 contacts a divalent metal cation. Residues 56–58 (DIG), 132–135 (TTNE), and Arg142 contribute to the 4-CDP-2-C-methyl-D-erythritol 2-phosphate site.

It belongs to the IspF family. As to quaternary structure, homotrimer. It depends on a divalent metal cation as a cofactor.

It carries out the reaction 4-CDP-2-C-methyl-D-erythritol 2-phosphate = 2-C-methyl-D-erythritol 2,4-cyclic diphosphate + CMP. It functions in the pathway isoprenoid biosynthesis; isopentenyl diphosphate biosynthesis via DXP pathway; isopentenyl diphosphate from 1-deoxy-D-xylulose 5-phosphate: step 4/6. Involved in the biosynthesis of isopentenyl diphosphate (IPP) and dimethylallyl diphosphate (DMAPP), two major building blocks of isoprenoid compounds. Catalyzes the conversion of 4-diphosphocytidyl-2-C-methyl-D-erythritol 2-phosphate (CDP-ME2P) to 2-C-methyl-D-erythritol 2,4-cyclodiphosphate (ME-CPP) with a corresponding release of cytidine 5-monophosphate (CMP). The chain is 2-C-methyl-D-erythritol 2,4-cyclodiphosphate synthase from Chlorobium phaeobacteroides (strain DSM 266 / SMG 266 / 2430).